A 211-amino-acid polypeptide reads, in one-letter code: MKGILGTKIGMTQIWKNDRAIPVTVVLAGPCPIVQRKTAQTDGYEAVQIGYAPKAERKVNKPMQGHFAKAGVAPTRILREFRGFAPDGDSVNVDIFAEGEKIDATGTSKGKGTQGVMKRWNFAGGPASHGSKKWHRRPGSIGQRKTPGRVYKGKRMAGHMGMERVTVQNLEVVEIRAGENLILVKGAIPGANGGLVVLRSAAKASAAKGGK.

A disordered region spans residues 125–148 (GPASHGSKKWHRRPGSIGQRKTPG).

Belongs to the universal ribosomal protein uL3 family. Part of the 50S ribosomal subunit. Forms a cluster with proteins L14 and L19. Also contacts proteins L13 and L17.

One of the primary rRNA binding proteins, it binds directly near the 3'-end of the 23S rRNA, where it nucleates assembly of the 50S subunit. The sequence is that of Large ribosomal subunit protein uL3 (rplC) from Deinococcus radiodurans (strain ATCC 13939 / DSM 20539 / JCM 16871 / CCUG 27074 / LMG 4051 / NBRC 15346 / NCIMB 9279 / VKM B-1422 / R1).